Reading from the N-terminus, the 740-residue chain is Catalase-peroxidase (740 aa).

Positions W102–Y229 form a cross-link, tryptophyl-tyrosyl-methioninium (Trp-Tyr) (with M-256). Catalysis depends on H103, which acts as the Proton acceptor. Positions G111–W130 are disordered. Positions Y229–M256 form a cross-link, tryptophyl-tyrosyl-methioninium (Tyr-Met) (with W-102). H271 lines the heme b pocket.

Belongs to the peroxidase family. Peroxidase/catalase subfamily. As to quaternary structure, homodimer or homotetramer. Heme b serves as cofactor. Formation of the three residue Trp-Tyr-Met cross-link is important for the catalase, but not the peroxidase activity of the enzyme.

The catalysed reaction is H2O2 + AH2 = A + 2 H2O. It catalyses the reaction 2 H2O2 = O2 + 2 H2O. Bifunctional enzyme with both catalase and broad-spectrum peroxidase activity. This is Catalase-peroxidase from Erythrobacter litoralis (strain HTCC2594).